The sequence spans 86 residues: Protein GOLVEN 1 (86 aa).

A signal peptide spans 1–29; sequence MSCSLRSGLVIVFCFILLLLSSNVGCASA. A propeptide spanning residues 30–70 is cleaved from the precursor; that stretch reads ARRLRSHKHHHHKVASLDVFNGGERRRALGGVETGEEVVVM. At tyrosine 72 the chain carries Sulfotyrosine. Proline 80 is modified (hydroxyproline). The propeptide occupies 84–86; the sequence is EKS.

The protein belongs to the RGF family. In terms of assembly, binds to LRR receptor-like serine/threonine-protein kinases to trigger their dimerization with SERK proteins and subsequent signaling. As to expression, expressed in stems, hypocotyls, cotyledons, leaves, flowers, shoot apex, siliques, stamens and petals.

It is found in the endoplasmic reticulum. Its subcellular location is the secreted. Signaling peptide (root growth factor) that regulates the pattern of root growth and lateral root development by modulating the length and the number of cortical cells in the root apical meristem (RAM), and the anticlinal asymmetric cell divisions in lateral root initiation cells. Also involved in the regulation of hypocotyl bending and root gravitropism in a PIN2-traffic dependent manner, thus influencing the formation of auxin gradients. Maintains the postembryonic root stem cell niche. This Arabidopsis thaliana (Mouse-ear cress) protein is Protein GOLVEN 1.